Consider the following 422-residue polypeptide: Adenosylhomocysteinase (422 aa).

Residues Asp-129 and Glu-154 each coordinate substrate. NAD(+) is bound at residue 155 to 157 (TTT). Substrate is bound by residues Lys-184 and Asp-188. NAD(+) contacts are provided by residues Asn-189, 218-223 (GYGWCG), Glu-241, Asn-276, 297-299 (AGH), and Asn-344.

It belongs to the adenosylhomocysteinase family. Requires NAD(+) as cofactor.

Its subcellular location is the cytoplasm. The enzyme catalyses S-adenosyl-L-homocysteine + H2O = L-homocysteine + adenosine. It participates in amino-acid biosynthesis; L-homocysteine biosynthesis; L-homocysteine from S-adenosyl-L-homocysteine: step 1/1. In terms of biological role, may play a key role in the regulation of the intracellular concentration of adenosylhomocysteine. The protein is Adenosylhomocysteinase of Pyrococcus abyssi (strain GE5 / Orsay).